The sequence spans 431 residues: Enolase (431 aa).

Q167 serves as a coordination point for (2R)-2-phosphoglycerate. E209 functions as the Proton donor in the catalytic mechanism. D246, E289, and D316 together coordinate Mg(2+). The (2R)-2-phosphoglycerate site is built by K341, R370, S371, and K392. The active-site Proton acceptor is K341.

It belongs to the enolase family. As to quaternary structure, component of the RNA degradosome, a multiprotein complex involved in RNA processing and mRNA degradation. Mg(2+) is required as a cofactor.

It is found in the cytoplasm. Its subcellular location is the secreted. It localises to the cell surface. It catalyses the reaction (2R)-2-phosphoglycerate = phosphoenolpyruvate + H2O. It participates in carbohydrate degradation; glycolysis; pyruvate from D-glyceraldehyde 3-phosphate: step 4/5. Its function is as follows. Catalyzes the reversible conversion of 2-phosphoglycerate (2-PG) into phosphoenolpyruvate (PEP). It is essential for the degradation of carbohydrates via glycolysis. This Chromohalobacter salexigens (strain ATCC BAA-138 / DSM 3043 / CIP 106854 / NCIMB 13768 / 1H11) protein is Enolase.